The sequence spans 202 residues: Josephin-1 (202 aa).

Residues 1 to 22 are disordered; it reads MSCVPWKGDKAKAESSDLPQAA. S15 is modified (phosphoserine). Residues 23–202 enclose the Josephin domain; it reads PPQIYHEKQR…EAHQSWRADV (180 aa). C36 serves as the catalytic Nucleophile. The active-site Proton acceptor is the H139.

As to quaternary structure, interacts with beta-actin/ACTB. In terms of processing, monoubiquitinated. Ubiquitination activates deubiquitination activity in vitro. In terms of tissue distribution, widely expressed (at protein level).

Its subcellular location is the cell membrane. The protein localises to the cytoplasm. It carries out the reaction Thiol-dependent hydrolysis of ester, thioester, amide, peptide and isopeptide bonds formed by the C-terminal Gly of ubiquitin (a 76-residue protein attached to proteins as an intracellular targeting signal).. Deubiquitinates monoubiquitinated probes (in vitro). When ubiquitinated, cleaves 'Lys-63'-linked and 'Lys-48'-linked poly-ubiquitin chains (in vitro), hence may act as a deubiquitinating enzyme. May increase macropinocytosis and suppress clathrin- and caveolae-mediated endocytosis. May enhance membrane dynamics and cell motility independently of its catalytic activity. The sequence is that of Josephin-1 (Josd1) from Mus musculus (Mouse).